Consider the following 201-residue polypeptide: dTTP/UTP pyrophosphatase (201 aa).

D76 functions as the Proton acceptor in the catalytic mechanism.

This sequence belongs to the Maf family. YhdE subfamily. It depends on a divalent metal cation as a cofactor.

The protein localises to the cytoplasm. The enzyme catalyses dTTP + H2O = dTMP + diphosphate + H(+). The catalysed reaction is UTP + H2O = UMP + diphosphate + H(+). Its function is as follows. Nucleoside triphosphate pyrophosphatase that hydrolyzes dTTP and UTP. May have a dual role in cell division arrest and in preventing the incorporation of modified nucleotides into cellular nucleic acids. This is dTTP/UTP pyrophosphatase from Neisseria meningitidis serogroup A / serotype 4A (strain DSM 15465 / Z2491).